A 388-amino-acid chain; its full sequence is Chorismate synthase (388 aa).

Residues arginine 39 and arginine 45 each coordinate NADP(+). FMN contacts are provided by residues 130 to 132 (RSS), 251 to 252 (NA), glycine 296, 311 to 315 (KPIPT), and arginine 337.

The protein belongs to the chorismate synthase family. As to quaternary structure, homotetramer. The cofactor is FMNH2.

The catalysed reaction is 5-O-(1-carboxyvinyl)-3-phosphoshikimate = chorismate + phosphate. Its pathway is metabolic intermediate biosynthesis; chorismate biosynthesis; chorismate from D-erythrose 4-phosphate and phosphoenolpyruvate: step 7/7. In terms of biological role, catalyzes the anti-1,4-elimination of the C-3 phosphate and the C-6 proR hydrogen from 5-enolpyruvylshikimate-3-phosphate (EPSP) to yield chorismate, which is the branch point compound that serves as the starting substrate for the three terminal pathways of aromatic amino acid biosynthesis. This reaction introduces a second double bond into the aromatic ring system. The polypeptide is Chorismate synthase (Streptococcus thermophilus (strain CNRZ 1066)).